A 282-amino-acid polypeptide reads, in one-letter code: MDYNLPIPLEGLKETPPTAFLTKTYNIVEDSSTNNIVSWSRDNNSFIVWEPETFALICLPRCFKHNNFSSFVRQLNTYGFKKIDTERWEFANEHFLKGERHLLKNIKRRKTSSQTQTQSLEGEIHELRRDRMALEVELVRLRRKQESVKTYLHLMEEKLKVTEVKQEMMMNFLLKKIKKPSFLQSLRKRNLQGIKNREQKQEVISSHGVEDNGKFVKAEPEEYGDDIDDQCGGVFDYGDELHIASMEHQGQGEDEIEMDSEGIWKGFVLSEEEMCDLVEHFI.

Residues 17 to 111 mediate DNA binding; that stretch reads PTAFLTKTYN…LLKNIKRRKT (95 aa). Positions 111–177 are hydrophobic repeat HR-A/B; the sequence is TSSQTQTQSL…MMMNFLLKKI (67 aa). A Bipartite nuclear localization signal motif is present at residues 175-190; it reads KKIKKPSFLQSLRKRN. The AHA signature appears at 261–270; it reads EGIWKGFVLS.

This sequence belongs to the HSF family. Class A subfamily. As to quaternary structure, homotrimer. In terms of processing, exhibits temperature-dependent phosphorylation.

It is found in the nucleus. Transcriptional activator that specifically binds DNA sequence 5'-AGAAnnTTCT-3' known as heat shock promoter elements (HSE). The chain is Heat stress transcription factor A-6a (HSFA6A) from Arabidopsis thaliana (Mouse-ear cress).